Here is a 476-residue protein sequence, read N- to C-terminus: MRVLFTGAECAPFFKTGGLGDVLGSLPNQLAKEGVDVGVVLPLYQDLPEKYRKNLKYQGNFIVPVGWRNQYCGIFTLKLNGVNYFFIDNEYYFKRPGIYGYYDDGERYAYFQQAVIMMMERFDFIPDVLHCNDYHTAFIPFLLHEKWGFVDAYKGIKTILTIHNLEFQGKYNAKTLPDFFGMNYDWFDSGIVRMDNDVNWMKTGILYADRVTTVSPSYAREIQTVEFGQGLDAILRMCSHKLTGILNGIDFEKYNPKTDPVIKKNYDVYHLHHKSKDKIALQKELDLPIKPNIPLIGMVSRLTAQKGCQLLLDELDNILQFNVQIVILGNGDPYYEHRLMEIAERYPDKLKVILAFDVKLAQRIYAGADSFLMPSAFEPCGLSQLIALRYGTLPIVHEIGGLADTVWVYDETTNEGTGFGFKEFSGYQMVQAIKKMLALYQQKNNWLKIQKIAMKSDFSWKNSADKYKWMYGELIG.

Lys15 contributes to the ADP-alpha-D-glucose binding site.

Belongs to the glycosyltransferase 1 family. Bacterial/plant glycogen synthase subfamily.

It carries out the reaction [(1-&gt;4)-alpha-D-glucosyl](n) + ADP-alpha-D-glucose = [(1-&gt;4)-alpha-D-glucosyl](n+1) + ADP + H(+). Its pathway is glycan biosynthesis; glycogen biosynthesis. Synthesizes alpha-1,4-glucan chains using ADP-glucose. This Lactobacillus acidophilus (strain ATCC 700396 / NCK56 / N2 / NCFM) protein is Glycogen synthase.